We begin with the raw amino-acid sequence, 306 residues long: Ethylmalonyl-CoA decarboxylase (306 aa).

Lys-216 bears the N6-acetyllysine; alternate mark. Lys-216 bears the N6-succinyllysine; alternate mark.

This sequence belongs to the enoyl-CoA hydratase/isomerase family.

It localises to the cytoplasm. The protein localises to the cytosol. It catalyses the reaction (2S)-ethylmalonyl-CoA + H(+) = butanoyl-CoA + CO2. It carries out the reaction (S)-methylmalonyl-CoA + H(+) = propanoyl-CoA + CO2. The catalysed reaction is (2R)-ethylmalonyl-CoA + H(+) = butanoyl-CoA + CO2. Decarboxylates ethylmalonyl-CoA, a potentially toxic metabolite, to form butyryl-CoA, suggesting it might be involved in metabolite proofreading. Acts preferentially on (S)-ethylmalonyl-CoA but also has some activity on the (R)-isomer. Also has methylmalonyl-CoA decarboxylase activity at lower level. The sequence is that of Ethylmalonyl-CoA decarboxylase (ECHDC1) from Bos taurus (Bovine).